The primary structure comprises 234 residues: Synaptogyrin-1 (234 aa).

Met-1 bears the N-acetylmethionine mark. The Cytoplasmic portion of the chain corresponds to 1-23 (MEGGAYGAGKAGGAFDPYTLVRQ). The MARVEL domain maps to 20-173 (LVRQPHTILR…QAVLAFQRYQ (154 aa)). Residues 24-44 (PHTILRVVSWVFSIVVFGSIV) traverse the membrane as a helical segment. Topologically, residues 45–71 (NEGYLNNPEEEEEFCIYNRNPNACSYG) are lumenal. A helical transmembrane segment spans residues 72–92 (VTVGVLAFLTCLLYLALDVYF). Topologically, residues 93 to 103 (PQISSVKDRKK) are cytoplasmic. A helical transmembrane segment spans residues 104–124 (AVLSDIGVSAFWAFFWFVGFC). The Lumenal portion of the chain corresponds to 125–148 (FLANQWQVSKPKDNPLNEGTDAAR). Residues 149–169 (AAIAFSFFSIFTWAGQAVLAF) form a helical membrane-spanning segment. Topologically, residues 170–234 (QRYQIGADSA…EPQGYQSQGY (65 aa)) are cytoplasmic. The disordered stretch occupies residues 201–234 (EPSAGSDPAGMGGTYQHPANAFDAEPQGYQSQGY).

This sequence belongs to the synaptogyrin family.

Its subcellular location is the cytoplasmic vesicle. It is found in the secretory vesicle. The protein localises to the synaptic vesicle membrane. It localises to the melanosome. Functionally, may play a role in regulated exocytosis. Modulates the localization of synaptophysin/SYP into synaptic-like microvesicles and may therefore play a role in synaptic-like microvesicle formation and/or maturation. Involved in the regulation of short-term and long-term synaptic plasticity. This Mus musculus (Mouse) protein is Synaptogyrin-1.